The sequence spans 100 residues: Small ribosomal subunit protein uS14 (100 aa).

It belongs to the universal ribosomal protein uS14 family. As to quaternary structure, part of the 30S ribosomal subunit. Contacts proteins S3 and S10.

In terms of biological role, binds 16S rRNA, required for the assembly of 30S particles and may also be responsible for determining the conformation of the 16S rRNA at the A site. This Trichodesmium erythraeum (strain IMS101) protein is Small ribosomal subunit protein uS14.